Reading from the N-terminus, the 257-residue chain is Pyridoxine 5'-phosphate synthase (257 aa).

3-amino-2-oxopropyl phosphate is bound at residue Asn-16. 18–19 (DH) contacts 1-deoxy-D-xylulose 5-phosphate. Arg-27 is a 3-amino-2-oxopropyl phosphate binding site. His-52 serves as the catalytic Proton acceptor. Arg-54 and His-59 together coordinate 1-deoxy-D-xylulose 5-phosphate. The Proton acceptor role is filled by Glu-79. Residue Thr-109 participates in 1-deoxy-D-xylulose 5-phosphate binding. Catalysis depends on His-200, which acts as the Proton donor. 3-amino-2-oxopropyl phosphate contacts are provided by residues Gly-201 and 222–223 (GH).

It belongs to the PNP synthase family. Homooctamer; tetramer of dimers.

The protein localises to the cytoplasm. It carries out the reaction 3-amino-2-oxopropyl phosphate + 1-deoxy-D-xylulose 5-phosphate = pyridoxine 5'-phosphate + phosphate + 2 H2O + H(+). Its pathway is cofactor biosynthesis; pyridoxine 5'-phosphate biosynthesis; pyridoxine 5'-phosphate from D-erythrose 4-phosphate: step 5/5. Functionally, catalyzes the complicated ring closure reaction between the two acyclic compounds 1-deoxy-D-xylulose-5-phosphate (DXP) and 3-amino-2-oxopropyl phosphate (1-amino-acetone-3-phosphate or AAP) to form pyridoxine 5'-phosphate (PNP) and inorganic phosphate. In Burkholderia pseudomallei (strain K96243), this protein is Pyridoxine 5'-phosphate synthase.